A 264-amino-acid chain; its full sequence is Small ribosomal subunit protein uS2 (264 aa).

The protein belongs to the universal ribosomal protein uS2 family.

In Latilactobacillus sakei subsp. sakei (strain 23K) (Lactobacillus sakei subsp. sakei), this protein is Small ribosomal subunit protein uS2.